The following is a 717-amino-acid chain: Trimethylamine N-oxide transport system permease protein TmoV (717 aa).

The next 17 membrane-spanning stretches (helical) occupy residues 10-30 (FFQW…IEVP), 69-89 (LPPL…FLMN), 120-140 (FMTF…ETIV), 153-173 (WAEL…ILGY), 175-195 (LSGK…SVFG), 206-226 (FILV…VMAF), 238-258 (ILLV…IVLF), 265-285 (AVII…LLGL), 319-339 (ILIG…ISAF), 355-375 (QLNI…AILL), 402-422 (ILFF…GSFY), 452-472 (IWDT…VDVL), 488-508 (LVLV…LVVG), 527-547 (LYMA…VGII), 574-594 (LIPV…AVIV), 643-663 (MLGL…GAFI), and 683-703 (GIGL…DHLI). The ABC transmembrane type-1 1 domain maps to 200 to 379 (SMQTLSFILV…LIAILLDKMS (180 aa)). Residues 523–703 (ALVTLYMATF…FIGLIFDHLI (181 aa)) enclose the ABC transmembrane type-1 2 domain.

Belongs to the binding-protein-dependent transport system permease family. The complex is probably composed of two ATP-binding proteins (TmoW), two transmembrane proteins (TmoV) and a solute-binding protein (TmoX).

It is found in the cell inner membrane. In terms of biological role, part of the ABC transporter complex TmoXWV involved in trimethylamine N-oxide (TMAO) import. Responsible for the translocation of the substrate across the membrane. In Pelagibacter ubique (strain HTCC1062), this protein is Trimethylamine N-oxide transport system permease protein TmoV.